Reading from the N-terminus, the 143-residue chain is Ribosomal RNA large subunit methyltransferase H (143 aa).

Residues leucine 68 and glycine 95 each coordinate S-adenosyl-L-methionine.

Belongs to the RNA methyltransferase RlmH family. In terms of assembly, homodimer.

The protein localises to the cytoplasm. It catalyses the reaction pseudouridine(1915) in 23S rRNA + S-adenosyl-L-methionine = N(3)-methylpseudouridine(1915) in 23S rRNA + S-adenosyl-L-homocysteine + H(+). Specifically methylates the pseudouridine at position 1915 (m3Psi1915) in 23S rRNA. The sequence is that of Ribosomal RNA large subunit methyltransferase H from Mycoplasma mobile (strain ATCC 43663 / 163K / NCTC 11711) (Mesomycoplasma mobile).